Consider the following 262-residue polypeptide: pFDCC methylesterase MES16 (262 aa).

The active-site Acyl-ester intermediate is Ser-87. Catalysis depends on charge relay system residues Asp-211 and His-239.

Belongs to the AB hydrolase superfamily. Methylesterase family.

The protein localises to the cytoplasm. The catalysed reaction is methyl (indol-3-yl)acetate + H2O = (indol-3-yl)acetate + methanol + H(+). It catalyses the reaction methyl (-)-jasmonate + H2O = jasmonate + methanol + H(+). The enzyme catalyses primary fluorescent dioxobilin-type chlorophyll catabolite + H2O = O13(4)-desmethyl pFDCC + methanol + H(+). Its pathway is plant hormone biosynthesis. The protein operates within lipid metabolism; oxylipin biosynthesis. It participates in porphyrin-containing compound metabolism; chlorophyll degradation. Functionally, involved in the chlorophyll breakdown by its action in fluorescent chlorophyll catabolites (FCCs) demethylation. Demethylates the C13(2)-carboxymethyl group present at the isocyclic ring of chlorophyll. Uses primary fluorescent dioxobilin-type chlorophyll catabolite (pFDCC) as substrate to produce O13(4)-desmethyl pFDCC. Also able to catalyze pheophorbides in vitro. Methylesterase shown to have carboxylesterase activity, methyl indole-3-acetic acid (MeIAA) esterase activity and methyl jasmonate (MeJA) esterase activity in vitro. This chain is pFDCC methylesterase MES16, found in Arabidopsis thaliana (Mouse-ear cress).